The primary structure comprises 316 residues: Probable 5-dehydro-4-deoxyglucarate dehydratase (316 aa).

It belongs to the DapA family.

The enzyme catalyses 5-dehydro-4-deoxy-D-glucarate + H(+) = 2,5-dioxopentanoate + CO2 + H2O. It participates in carbohydrate acid metabolism; D-glucarate degradation; 2,5-dioxopentanoate from D-glucarate: step 2/2. The sequence is that of Probable 5-dehydro-4-deoxyglucarate dehydratase from Corynebacterium glutamicum (strain ATCC 13032 / DSM 20300 / JCM 1318 / BCRC 11384 / CCUG 27702 / LMG 3730 / NBRC 12168 / NCIMB 10025 / NRRL B-2784 / 534).